We begin with the raw amino-acid sequence, 304 residues long: Aspartate carbamoyltransferase catalytic subunit (304 aa).

Carbamoyl phosphate contacts are provided by R49 and T50. Residue K77 participates in L-aspartate binding. Residues R99, H127, and Q130 each contribute to the carbamoyl phosphate site. Residues R160 and R211 each coordinate L-aspartate. Carbamoyl phosphate contacts are provided by A252 and P253.

The protein belongs to the aspartate/ornithine carbamoyltransferase superfamily. ATCase family. Heterododecamer (2C3:3R2) of six catalytic PyrB chains organized as two trimers (C3), and six regulatory PyrI chains organized as three dimers (R2).

The catalysed reaction is carbamoyl phosphate + L-aspartate = N-carbamoyl-L-aspartate + phosphate + H(+). It functions in the pathway pyrimidine metabolism; UMP biosynthesis via de novo pathway; (S)-dihydroorotate from bicarbonate: step 2/3. Functionally, catalyzes the condensation of carbamoyl phosphate and aspartate to form carbamoyl aspartate and inorganic phosphate, the committed step in the de novo pyrimidine nucleotide biosynthesis pathway. The protein is Aspartate carbamoyltransferase catalytic subunit of Bacillus mycoides (strain KBAB4) (Bacillus weihenstephanensis).